Here is a 402-residue protein sequence, read N- to C-terminus: Oxysterol-binding protein 12 (402 aa).

Positions 333 to 366 are disordered; it reads NNNNDKETAEEKAKIEEKQRKEESERREKGILWE. Positions 336-366 are enriched in basic and acidic residues; it reads NDKETAEEKAKIEEKQRKEESERREKGILWE.

Belongs to the OSBP family.

The polypeptide is Oxysterol-binding protein 12 (osbL) (Dictyostelium discoideum (Social amoeba)).